The following is an 808-amino-acid chain: Type VI secretion system spike protein VgrG4b (808 aa).

This sequence belongs to the VgrG protein family.

Its subcellular location is the secreted. Its function is as follows. Part of the H2 type VI secretion system (H2-T6SS) specialized secretion system, which delivers several virulence factors in both prokaryotic and eukaryotic cells during infection. Allows the delivery of the phospholipase effector PldA to target cells where it exerts its toxicity. The chain is Type VI secretion system spike protein VgrG4b from Pseudomonas aeruginosa (strain ATCC 15692 / DSM 22644 / CIP 104116 / JCM 14847 / LMG 12228 / 1C / PRS 101 / PAO1).